The primary structure comprises 152 residues: MEDEEVAESWEEAADSGEIDRRLEKKLKITQKESRKSKSPPKVPIVIQDDSLPAGPPPQIRILKRPTSNGVVSGPNSASRPALPVKSLAQREAEYAEARKRILGSASPEEEQEKPILDRPTRISQPEDSRQPNNVIRQPLGPDGSQGFKQRR.

M1 is subject to N-acetylmethionine. Disordered regions lie at residues 30–86 and 99–152; these read TQKE…LPVK and RKRI…KQRR. Phosphoserine occurs at positions 37, 39, and 51. The region spanning 42-107 is the SUZ domain; the sequence is KVPIVIQDDS…ARKRILGSAS (66 aa). Over residues 66 to 79 the composition is skewed to polar residues; it reads PTSNGVVSGPNSAS. Residues S105 and S107 each carry the phosphoserine modification. Residues 111 to 152 enclose the SUZ-C domain; sequence EQEKPILDRPTRISQPEDSRQPNNVIRQPLGPDGSQGFKQRR. Residues 113–130 are compositionally biased toward basic and acidic residues; that stretch reads EKPILDRPTRISQPEDSR.

This sequence belongs to the SZRD1 family.

In Bos taurus (Bovine), this protein is SUZ RNA-binding domain-containing (SZRD1).